A 264-amino-acid chain; its full sequence is Type III pantothenate kinase (264 aa).

6 to 13 (DVGNTNIK) lines the ATP pocket. 108-111 (GSDR) lines the substrate pocket. Catalysis depends on Asp110, which acts as the Proton acceptor. Thr134 is a binding site for ATP.

The protein belongs to the type III pantothenate kinase family. In terms of assembly, homodimer. Requires NH4(+) as cofactor. The cofactor is K(+).

Its subcellular location is the cytoplasm. It carries out the reaction (R)-pantothenate + ATP = (R)-4'-phosphopantothenate + ADP + H(+). The protein operates within cofactor biosynthesis; coenzyme A biosynthesis; CoA from (R)-pantothenate: step 1/5. Functionally, catalyzes the phosphorylation of pantothenate (Pan), the first step in CoA biosynthesis. The sequence is that of Type III pantothenate kinase from Ehrlichia canis (strain Jake).